Reading from the N-terminus, the 283-residue chain is Pantothenate synthetase (283 aa).

26 to 33 (MGNLHEGH) lines the ATP pocket. The Proton donor role is filled by His33. Residue Gln57 coordinates (R)-pantoate. Gln57 is a binding site for beta-alanine. Residue 144-147 (GKKD) coordinates ATP. Residue Gln150 coordinates (R)-pantoate. 181–184 (LSSR) provides a ligand contact to ATP.

Belongs to the pantothenate synthetase family. Homodimer.

It localises to the cytoplasm. The enzyme catalyses (R)-pantoate + beta-alanine + ATP = (R)-pantothenate + AMP + diphosphate + H(+). It participates in cofactor biosynthesis; (R)-pantothenate biosynthesis; (R)-pantothenate from (R)-pantoate and beta-alanine: step 1/1. Its function is as follows. Catalyzes the condensation of pantoate with beta-alanine in an ATP-dependent reaction via a pantoyl-adenylate intermediate. The polypeptide is Pantothenate synthetase (Variovorax paradoxus (strain S110)).